The following is a 101-amino-acid chain: Small ribosomal subunit protein uS14 (101 aa).

Belongs to the universal ribosomal protein uS14 family. In terms of assembly, part of the 30S ribosomal subunit. Contacts proteins S3 and S10.

Binds 16S rRNA, required for the assembly of 30S particles and may also be responsible for determining the conformation of the 16S rRNA at the A site. The polypeptide is Small ribosomal subunit protein uS14 (Ruegeria sp. (strain TM1040) (Silicibacter sp.)).